We begin with the raw amino-acid sequence, 451 residues long: Eukaryotic translation initiation factor 3 subunit E (451 aa).

A PCI domain is found at 256–425; it reads TDLFFSPAYI…GTVIMNHPPQ (170 aa).

It belongs to the eIF-3 subunit E family. As to quaternary structure, component of the eukaryotic translation initiation factor 3 (eIF-3) complex.

It localises to the cytoplasm. In terms of biological role, component of the eukaryotic translation initiation factor 3 (eIF-3) complex, which is involved in protein synthesis of a specialized repertoire of mRNAs and, together with other initiation factors, stimulates binding of mRNA and methionyl-tRNAi to the 40S ribosome. The eIF-3 complex specifically targets and initiates translation of a subset of mRNAs involved in cell proliferation. The protein is Eukaryotic translation initiation factor 3 subunit E (int6) of Aspergillus fumigatus (strain CBS 144.89 / FGSC A1163 / CEA10) (Neosartorya fumigata).